Reading from the N-terminus, the 64-residue chain is Putative H/ACA ribonucleoprotein complex subunit 3 (64 aa).

This sequence belongs to the NOP10 family. As to quaternary structure, component of the small nucleolar ribonucleoprotein particles containing H/ACA-type snoRNAs (H/ACA snoRNPs).

It is found in the nucleus. Its subcellular location is the nucleolus. Its function is as follows. Required for ribosome biogenesis. Part of a complex which catalyzes pseudouridylation of rRNA. This involves the isomerization of uridine such that the ribose is subsequently attached to C5, instead of the normal N1. Pseudouridine ('psi') residues may serve to stabilize the conformation of rRNAs. This is Putative H/ACA ribonucleoprotein complex subunit 3 (nola-3) from Caenorhabditis elegans.